We begin with the raw amino-acid sequence, 456 residues long: UDP-N-acetylmuramate--L-alanine ligase (456 aa).

118-124 contributes to the ATP binding site; it reads GTHGKST.

It belongs to the MurCDEF family.

It localises to the cytoplasm. The catalysed reaction is UDP-N-acetyl-alpha-D-muramate + L-alanine + ATP = UDP-N-acetyl-alpha-D-muramoyl-L-alanine + ADP + phosphate + H(+). The protein operates within cell wall biogenesis; peptidoglycan biosynthesis. In terms of biological role, cell wall formation. This is UDP-N-acetylmuramate--L-alanine ligase from Paenarthrobacter aurescens (strain TC1).